The chain runs to 396 residues: Elongation factor Tu (396 aa).

In terms of domain architecture, tr-type G spans 11–205; it reads KPHVNIGTIG…TVDEYVPTPE (195 aa). The G1 stretch occupies residues 20–27; that stretch reads GHVDHGKT. 20–27 provides a ligand contact to GTP; it reads GHVDHGKT. Threonine 27 lines the Mg(2+) pocket. The segment at 61–65 is G2; the sequence is GITIN. The tract at residues 82–85 is G3; the sequence is DAPG. Residues 82–86 and 137–140 contribute to the GTP site; these read DAPGH and NKTD. Residues 137-140 form a G4 region; the sequence is NKTD. The segment at 175–177 is G5; the sequence is SAL.

Belongs to the TRAFAC class translation factor GTPase superfamily. Classic translation factor GTPase family. EF-Tu/EF-1A subfamily. In terms of assembly, monomer.

The protein localises to the cytoplasm. It catalyses the reaction GTP + H2O = GDP + phosphate + H(+). In terms of biological role, GTP hydrolase that promotes the GTP-dependent binding of aminoacyl-tRNA to the A-site of ribosomes during protein biosynthesis. In Latilactobacillus sakei subsp. sakei (strain 23K) (Lactobacillus sakei subsp. sakei), this protein is Elongation factor Tu.